The following is a 234-amino-acid chain: Probable septum site-determining protein MinC (234 aa).

Belongs to the MinC family. As to quaternary structure, interacts with MinD and FtsZ.

In terms of biological role, cell division inhibitor that blocks the formation of polar Z ring septums. Rapidly oscillates between the poles of the cell to destabilize FtsZ filaments that have formed before they mature into polar Z rings. Prevents FtsZ polymerization. This chain is Probable septum site-determining protein MinC, found in Buchnera aphidicola subsp. Baizongia pistaciae (strain Bp).